The primary structure comprises 1072 residues: DNA-directed RNA polymerase subunit beta (1072 aa).

It belongs to the RNA polymerase beta chain family. As to quaternary structure, in plastids the minimal PEP RNA polymerase catalytic core is composed of four subunits: alpha, beta, beta', and beta''. When a (nuclear-encoded) sigma factor is associated with the core the holoenzyme is formed, which can initiate transcription.

Its subcellular location is the plastid. The protein resides in the chloroplast. It catalyses the reaction RNA(n) + a ribonucleoside 5'-triphosphate = RNA(n+1) + diphosphate. Functionally, DNA-dependent RNA polymerase catalyzes the transcription of DNA into RNA using the four ribonucleoside triphosphates as substrates. The protein is DNA-directed RNA polymerase subunit beta of Nasturtium officinale (Watercress).